Reading from the N-terminus, the 140-residue chain is Ribosome maturation factor RimP (140 aa).

This sequence belongs to the RimP family.

It is found in the cytoplasm. Its function is as follows. Required for maturation of 30S ribosomal subunits. The polypeptide is Ribosome maturation factor RimP (Campylobacter jejuni subsp. jejuni serotype O:23/36 (strain 81-176)).